A 92-amino-acid chain; its full sequence is Small ribosomal subunit protein uS19 (92 aa).

This sequence belongs to the universal ribosomal protein uS19 family.

Functionally, protein S19 forms a complex with S13 that binds strongly to the 16S ribosomal RNA. This Proteus mirabilis (strain HI4320) protein is Small ribosomal subunit protein uS19.